A 302-amino-acid chain; its full sequence is Alpha-N-acetyl-neuraminyl-2,3-beta-galactosyl-1,3-N-acetyl-galactosaminide alpha-2,6-sialyltransferase (302 aa).

Over 1–6 the chain is Cytoplasmic; that stretch reads MKAPGR. Residues 7-27 traverse the membrane as a helical; Signal-anchor for type II membrane protein segment; that stretch reads LVLIILCSVVFSAVYILLCCW. Topologically, residues 28–302 are lumenal; the sequence is AGLPLCLATC…VFAHPSWRTE (275 aa). Cys-76 and Cys-225 are oxidised to a cystine. An N-linked (GlcNAc...) asparagine glycan is attached at Asn-135.

Belongs to the glycosyltransferase 29 family. As to expression, ubiquitous.

The protein localises to the golgi apparatus membrane. The catalysed reaction is an alpha-Neu5Ac-(2-&gt;3)-beta-D-Gal-(1-&gt;3)-D-GlcNAc derivative + CMP-N-acetyl-beta-neuraminate = an alpha-Neu5Ac-(2-&gt;3)-beta-D-Gal-(1-&gt;3)-[alpha-Neu5Ac-(2-&gt;6)]-D-GlcNAc derivative + CMP + H(+). It carries out the reaction N-acetyl-alpha-neuraminosyl-(2-&gt;3)-beta-D-galactosyl-(1-&gt;3)-N-acetyl-D-galactosamine + CMP-N-acetyl-beta-neuraminate = N-acetyl-alpha-neuraminosyl-(2-&gt;3)-beta-D-galactosyl-(1-&gt;3)-[N-acetyl-alpha-neuraminosyl-(2-&gt;6)]-N-acetyl-D-galactosamine + CMP + H(+). The enzyme catalyses a ganglioside GM1b (d18:1(4E)) + CMP-N-acetyl-beta-neuraminate = a ganglioside GD1alpha (d18:1(4E)) + CMP + H(+). It catalyses the reaction 3-O-[alpha-Neu5Ac-(2-&gt;3)-beta-D-Gal-(1-&gt;3)-alpha-D-GalNAc]-L-Ser-[protein] + CMP-N-acetyl-beta-neuraminate = a 3-O-{alpha-Neu5Ac-(2-&gt;3)-beta-D-Gal-(1-&gt;3)-[alpha-Neu5Ac-(2-&gt;6)]-alpha-D-GalNAc}-L-seryl-[protein] + CMP + H(+). The catalysed reaction is 3-O-[alpha-Neu5Ac-(2-&gt;3)-beta-D-Gal-(1-&gt;3)-alpha-D-GalNAc]-L-Thr-[protein] + CMP-N-acetyl-beta-neuraminate = a 3-O-{alpha-Neu5Ac-(2-&gt;3)-beta-D-Gal-(1-&gt;3)-[alpha-Neu5Ac-(2-&gt;6)]-alpha-D-GalNAc}-L-threonyl-[protein] + CMP + H(+). Its pathway is protein modification; protein glycosylation. The protein operates within glycolipid biosynthesis. Its function is as follows. Transfers the sialyl group (N-acetyl-alpha-neuraminyl or NeuAc) from CMP-NeuAc to the GalNAc residue on the NeuAc-alpha-2,3-Gal-beta-1,3-GalNAc sequence of glycoproteins and glycolipids forming an alpha-2,6-linkage. Produces branched type disialyl structures by transfer of a sialyl group onto a GalNAc residue inside the backbone core chains. Prefers O-glycans to glycoproteins or glycolipids. In Homo sapiens (Human), this protein is Alpha-N-acetyl-neuraminyl-2,3-beta-galactosyl-1,3-N-acetyl-galactosaminide alpha-2,6-sialyltransferase (ST6GALNAC4).